Consider the following 489-residue polypeptide: Acetylcholine receptor subunit beta (489 aa).

The first 20 residues, 1–20 (NSGALLWPLIWGLLLIGTQA), serve as a signal peptide directing secretion. Residues 21 to 235 (LDKEAQLRDK…ITFYLVIQRK (215 aa)) lie on the Extracellular side of the membrane. N-linked (GlcNAc...) asparagine glycans are attached at residues N135 and N161. A disulfide bridge links C148 with C162. 3 helical membrane passes run 236–260 (PLFY…VFYL), 268–286 (MTLS…LLLA), and 302–323 (YLIF…VLNL). The Cytoplasmic portion of the chain corresponds to 324 to 457 (HHRSPNTHHM…WQYVAMVVDR (134 aa)). The chain crosses the membrane as a helical span at residues 458–476 (LFLWTFIAFTSLGTLSIFL).

This sequence belongs to the ligand-gated ion channel (TC 1.A.9) family. Acetylcholine receptor (TC 1.A.9.1) subfamily. Beta-1/CHRNB1 sub-subfamily. As to quaternary structure, pentamer of two alpha chains, and one each of the beta, delta, and gamma (in immature muscle) or epsilon (in mature muscle) chains.

The protein resides in the postsynaptic cell membrane. Its subcellular location is the cell membrane. The enzyme catalyses K(+)(in) = K(+)(out). It catalyses the reaction Na(+)(in) = Na(+)(out). In terms of biological role, after binding acetylcholine, the AChR responds by an extensive change in conformation that affects all subunits and leads to opening of an ion-conducting channel across the plasma membrane. In Xenopus laevis (African clawed frog), this protein is Acetylcholine receptor subunit beta (chrnb1).